Here is a 443-residue protein sequence, read N- to C-terminus: Phosphatidate cytidylyltransferase 2 (443 aa).

Residues 1–38 (MTELRQRAVREDAPPEDKESESEAKLDGETASDSESRA) are compositionally biased toward basic and acidic residues. The segment at 1 to 51 (MTELRQRAVREDAPPEDKESESEAKLDGETASDSESRAETAPPPTSIDDTP) is disordered. Residue S20 is modified to Phosphoserine. Phosphothreonine is present on T30. S32, S34, and S36 each carry phosphoserine. T50 is subject to Phosphothreonine. Helical transmembrane passes span 78–98 (MIAF…MIVM), 129–149 (WYFL…DYFF), 165–185 (HRFI…LSLV), 212–232 (LVIH…SCVI), 261–281 (GFIG…YVMS), and 338–358 (SALS…ASGF).

Belongs to the CDS family. Homodimer.

The protein resides in the endoplasmic reticulum membrane. It catalyses the reaction a 1,2-diacyl-sn-glycero-3-phosphate + CTP + H(+) = a CDP-1,2-diacyl-sn-glycerol + diphosphate. The catalysed reaction is 1-octadecanoyl-2-(5Z,8Z,11Z,14Z-eicosatetraenoyl)-sn-glycero-3-phosphate + CTP + H(+) = 1-octadecanoyl-2-(5Z,8Z,11Z,14Z-eicosatetraenoyl)-sn-glycero-3-cytidine-5'-diphosphate + diphosphate. It carries out the reaction 1-octadecanoyl-2-(9Z,12Z-octadecadienoyl)-sn-glycero-3-phosphate + CTP + H(+) = 1-octadecanoyl-2-(9Z,12Z-octadecadienoyl)-sn-glycero-3-cytidine-5'-diphosphate + diphosphate. The enzyme catalyses 1-hexadecanoyl-2-(5Z,8Z,11Z,14Z-eicosatetraenoyl)-sn-glycero-3-phosphate + CTP + H(+) = 1-hexadecanoyl-2-(5Z,8Z,11Z,14Z-eicosatetraenoyl)-sn-glycero-3-cytidine-5'-diphosphate + diphosphate. It catalyses the reaction 1,2-di-(5Z,8Z,11Z,14Z)-eicosatetraenoyl-sn-glycero-3-phosphate + CTP + H(+) = 1,2-di-(5Z,8Z,11Z,14Z-eicosatetraenoyl)-sn-glycero-3-cytidine-5'-diphosphate + diphosphate. The catalysed reaction is 1-octadecanoyl-2-(9Z-octadecenoyl)-sn-glycero-3-phosphate + CTP + H(+) = 1-octadecanoyl-2-(9Z-octadecenoyl)-sn-glycero-3-cytidine-5'-diphosphate + diphosphate. It carries out the reaction 1-octadecanoyl-2-(4Z,7Z,10Z,13Z,16Z,19Z-docosahexaenoyl)-sn-glycero-3-phosphate + CTP + H(+) = 1-octadecanoyl-2-(4Z,7Z,10Z,13Z,16Z,19Z-docosahexaenoyl)-sn-glycero-3-cytidine-5'-diphosphate + diphosphate. The enzyme catalyses 1,2-di-(9Z,12Z-octadecadienoyl)-sn-glycero-3-phosphate + CTP + H(+) = 1,2-di-(9Z,12Z-octadecadienoyl)-sn-glycero-3-cytidine-5'-diphosphate + diphosphate. It catalyses the reaction 1,2-di-(9Z-octadecenoyl)-sn-glycero-3-phosphate + CTP + H(+) = 1,2-di-(9Z-octadecenoyl)-sn-glycero-3-cytidine-5'-diphosphate + diphosphate. Its pathway is phospholipid metabolism; CDP-diacylglycerol biosynthesis; CDP-diacylglycerol from sn-glycerol 3-phosphate: step 3/3. Functionally, catalyzes the conversion of phosphatidic acid (PA) to CDP-diacylglycerol (CDP-DAG), an essential intermediate in the synthesis of phosphatidylglycerol, cardiolipin and phosphatidylinositol. Exhibits specificity for the nature of the acyl chains at the sn-1 and sn-2 positions in the substrate, PA and the preferred acyl chain composition is 1-stearoyl-2-arachidonoyl-sn-phosphatidic acid. Plays an important role in regulating the growth and maturation of lipid droplets which are storage organelles at the center of lipid and energy homeostasis. The chain is Phosphatidate cytidylyltransferase 2 from Rattus norvegicus (Rat).